A 185-amino-acid chain; its full sequence is MANEIVTTAQDRMKQSLGSLQRDLGHIRAGRANASLLDRVQVVYYGAPTPLNQLASITIPEARVLMVTPFDKSILKDIEKALYESDLGITPANDGSVIRLVIPMLTEERRRELVKEMGKYIESAKVAIRNIRRDAMDTAKKSEKAKEITEDDLKDLENNIQKVTDDAVKEADRLASIKEKELLDI.

The protein belongs to the RRF family.

It localises to the cytoplasm. In terms of biological role, responsible for the release of ribosomes from messenger RNA at the termination of protein biosynthesis. May increase the efficiency of translation by recycling ribosomes from one round of translation to another. The protein is Ribosome-recycling factor of Lactococcus lactis subsp. lactis (strain IL1403) (Streptococcus lactis).